We begin with the raw amino-acid sequence, 680 residues long: Nodulation protein NolNO (680 aa).

The protein belongs to the NodU/CmcH family.

Its subcellular location is the cytoplasm. Involved in the O-carbamoylation of nod factors. The polypeptide is Nodulation protein NolNO (nolO) (Sinorhizobium fredii (strain NBRC 101917 / NGR234)).